The sequence spans 259 residues: Thiazole synthase (259 aa).

The Schiff-base intermediate with DXP role is filled by Lys99. 1-deoxy-D-xylulose 5-phosphate contacts are provided by residues Gly161, 187-188, and 209-210; these read AG and NT.

It belongs to the ThiG family. Homotetramer. Forms heterodimers with either ThiH or ThiS.

It is found in the cytoplasm. The catalysed reaction is [ThiS sulfur-carrier protein]-C-terminal-Gly-aminoethanethioate + 2-iminoacetate + 1-deoxy-D-xylulose 5-phosphate = [ThiS sulfur-carrier protein]-C-terminal Gly-Gly + 2-[(2R,5Z)-2-carboxy-4-methylthiazol-5(2H)-ylidene]ethyl phosphate + 2 H2O + H(+). It participates in cofactor biosynthesis; thiamine diphosphate biosynthesis. Its function is as follows. Catalyzes the rearrangement of 1-deoxy-D-xylulose 5-phosphate (DXP) to produce the thiazole phosphate moiety of thiamine. Sulfur is provided by the thiocarboxylate moiety of the carrier protein ThiS. In vitro, sulfur can be provided by H(2)S. This chain is Thiazole synthase, found in Nitratiruptor sp. (strain SB155-2).